A 113-amino-acid chain; its full sequence is U11-theraphotoxin-Hhn1a (113 aa).

A signal peptide spans 1-21 (MNTVRVTFLLVFVLAVSLGQT). A propeptide spanning residues 22–74 (DKDENRMEMQEKTEQGKSYLDFAENLLLQKLEELEAKLLEEDSEESRNSRQKR) is cleaved from the precursor. 3 disulfides stabilise this stretch: cysteine 75/cysteine 90, cysteine 82/cysteine 95, and cysteine 89/cysteine 110.

The protein belongs to the neurotoxin 14 (magi-1) family. 01 (HNTX-16) subfamily. Expressed by the venom gland.

It is found in the secreted. Probable ion channel inhibitor. In Cyriopagopus hainanus (Chinese bird spider), this protein is U11-theraphotoxin-Hhn1a.